We begin with the raw amino-acid sequence, 221 residues long: Veficolin-1 (221 aa).

Positions 1-25 (MTAWLDFPLALSPLVVVSMKGGSFG) are cleaved as a signal peptide. The 55-residue stretch at 50-104 (QGQAGIPGIPGVPGTNGLPGAKGDLGPQGPPGERGSTGIPGKAGPKGDKGDQGEA) folds into the Collagen-like domain. Residues 54–104 (GIPGIPGVPGTNGLPGAKGDLGPQGPPGERGSTGIPGKAGPKGDKGDQGEA) are disordered. In terms of domain architecture, Fibrinogen C-terminal spans 111-221 (QQQEAGAKDC…DFNNSKTFAK (111 aa)). C120 and C148 are oxidised to a cystine.

The protein belongs to the ficolin lectin family. Veficolin subfamily. As to expression, expressed by the mandibular venom duct.

The protein resides in the secreted. Its function is as follows. Initiates complement activation and/or interferes in platelet aggregation and/or blood coagulation. This chain is Veficolin-1, found in Varanus komodoensis (Komodo dragon).